The sequence spans 271 residues: Transmembrane protein 192 (271 aa).

At Met-1 to Pro-46 the chain is on the cytoplasmic side. Phosphothreonine is present on Thr-15. A Phosphoserine modification is found at Ser-17. Residues Thr-47–Leu-67 traverse the membrane as a helical segment. Residues Thr-68 to Gln-93 lie on the Lumenal side of the membrane. Residues Thr-94–Ile-114 form a helical membrane-spanning segment. Over Gln-115 to Arg-138 the chain is Cytoplasmic. A helical transmembrane segment spans residues Leu-139–His-159. Over Ser-160–Leu-171 the chain is Lumenal. The helical transmembrane segment at Ile-172–Val-192 threads the bilayer. Topologically, residues Lys-193–Thr-271 are cytoplasmic. Tyr-213 is modified (phosphotyrosine). Phosphoserine occurs at positions 229, 230, and 269.

Belongs to the TMEM192 family. Homodimer. Not N-glycosylated. In terms of tissue distribution, strongly expressed in kidney, liver, lung and pancreas.

It is found in the lysosome membrane. The protein resides in the late endosome. This Homo sapiens (Human) protein is Transmembrane protein 192 (TMEM192).